The primary structure comprises 640 residues: Rab proteins geranylgeranyltransferase component A (640 aa).

Disordered stretches follow at residues 414–439 and 594–640; these read DILG…NNNN and HNEN…EMEL. Residues 419–439 show a composition bias toward low complexity; that stretch reads NNNNNNNNNNNNNNNNNNNNN. The segment covering 604 to 624 has biased composition (acidic residues); that stretch reads IDSDEDEDEDINDMNDNEEED.

Belongs to the Rab GDI family.

Functionally, substrate-binding subunit (component A) of the Rab geranylgeranyltransferase (GGTase) complex. Binds unprenylated Rab proteins and presents the substrate peptide to the catalytic component B. The component A is thought to be regenerated by transferring its prenylated Rab back to the donor membrane. The chain is Rab proteins geranylgeranyltransferase component A (MRS6) from Candida albicans (Yeast).